The following is a 144-amino-acid chain: Protein cornichon (144 aa).

Over 1-10 the chain is Lumenal; it reads MAFNFTAFTY. Residues 1 to 57 are interaction with grk; that stretch reads MAFNFTAFTYIVALIGDAFLIFFAIFHVIAFDELKTDYKNPIDQCNSLNPLVLPEYL. Residues 11-31 traverse the membrane as a helical segment; that stretch reads IVALIGDAFLIFFAIFHVIAF. Residues 32–56 lie on the Cytoplasmic side of the membrane; it reads DELKTDYKNPIDQCNSLNPLVLPEY. The helical transmembrane segment at 57-77 threads the bilayer; sequence LLHLFLNLLFLFCGEWYSLCL. The Lumenal segment spans residues 78–122; it reads NIPLIAYHIWRYKNRPLMSGPGLYDPTTVLKTDTLSRNLREGWIK. A helical transmembrane segment spans residues 123-143; it reads LAVYLISFFYYIYGMVYSLIS. Thr144 is a topological domain (cytoplasmic).

The protein belongs to the cornichon family. In terms of assembly, interacts with grk.

It localises to the endoplasmic reticulum membrane. Its function is as follows. Acts as a cargo receptor necessary for the transportation of gurken (grk) to a transitional endoplasmic reticulum (tER) site and promotes its incorporation into coat protein complex II (COPII) vesicles. Associated with gurken, produces a signal received by torpedo resulting in a signaling pathway that first establishes posterior follicle cell fates and normal localization of the anterior and posterior determinants, later they act in a signaling event inducing dorsal follicle cell fates and regulating the dorsal-ventral pattern of egg and embryo. The polypeptide is Protein cornichon (cni) (Drosophila virilis (Fruit fly)).